Here is a 426-residue protein sequence, read N- to C-terminus: Alpha-ionylideneethane synthase abl3 (426 aa).

It belongs to the alpha-ionylideneethane synthase family.

Its pathway is hormone biosynthesis. Its function is as follows. Alpha-ionylideneethane synthase; part of the gene cluster that mediates the biosynthesis of abscisic acid (ABA), a phytohormone that acts antagonistically toward salicylic acid (SA), jasmonic acid (JA) and ethylene (ETH) signaling, to impede plant defense responses. The first step of the pathway catalyzes the reaction from farnesyl diphosphate to alpha-ionylideneethane performed by the alpha-ionylideneethane synthase abl3 via a three-step reaction mechanism involving 2 neutral intermediates, beta-farnesene and allofarnesene. The cytochrome P450 monooxygenase abl1 might then be involved in the conversion of alpha-ionylideneethane to alpha-ionylideneacetic acid. Alpha-ionylideneacetic acid is further converted to abscisic acid in 2 steps involving the cytochrome P450 monooxygenase abl2 and the short-chain dehydrogenase/reductase abl4, via the intermediates 1'-deoxy-ABA or 1',4'-trans-diol-ABA, depending on the order of action of these 2 enzymes. Abl2 is responsible for the hydroxylation of carbon atom C-1' and abl4 might be involved in the oxidation of the C-4' carbon atom. In Leptosphaeria maculans (strain JN3 / isolate v23.1.3 / race Av1-4-5-6-7-8) (Blackleg fungus), this protein is Alpha-ionylideneethane synthase abl3.